We begin with the raw amino-acid sequence, 136 residues long: Protein NrdI (136 aa).

Belongs to the NrdI family.

Functionally, probably involved in ribonucleotide reductase function. In Enterobacter sp. (strain 638), this protein is Protein NrdI.